A 383-amino-acid polypeptide reads, in one-letter code: RNA-binding motif, single-stranded-interacting protein 2 (383 aa).

M1 carries the N-acetylmethionine modification. Residues 28-56 (QMAPPSPRNSTPNSSGGGGGGSGGNDQLS) form a disordered region. The segment covering 42 to 51 (SGGGGGGSGG) has biased composition (gly residues). 2 RRM domains span residues 58-131 (TNLY…MAKQ) and 137-222 (TNLY…FADG). A Phosphoserine modification is found at S108. S287 is modified (phosphoserine). Positions 352 to 383 (SSVSAEESNGQQNQLAVEPPSDHGVYPFQFSK) are disordered.

The protein resides in the nucleus. This Mus musculus (Mouse) protein is RNA-binding motif, single-stranded-interacting protein 2 (Rbms2).